The chain runs to 799 residues: Armadillo repeat-containing protein wrm-1 (799 aa).

Over residues 1 to 10 (MEERGPDIEK) the composition is skewed to basic and acidic residues. Residues 1–60 (MEERGPDIEKYGSQPCTPLSFDPMLPSTSRVATPVRPSSTLSARQAPASPFRAQPQNMEP) are disordered. Residues 26–43 (PSTSRVATPVRPSSTLSA) show a composition bias toward polar residues. The stretch at 454–496 (ESIRRVIQVVGSDDATIAERATGVLRNIGQPNKQNKVIMVRNG) is one ARM repeat.

As to quaternary structure, interacts (independently of ARM repeat) with nhr-25. Component of the beta-catenin-lit-1 complex (also called the lit-1/wrm-1 complex or the wrm-1/lit-1 kinase complex) at least composed of lit-1 and wrm-1. Interacts (via N-terminus) with lit-1; the interaction is direct and activates lit-1 kinase activity which leads to the phosphorylation of pop-1. This promotes pop-1 interaction with par-5 and translocation of pop-1 from the nucleus to the cytoplasm.

The protein resides in the cytoplasm. Its subcellular location is the cell cortex. The protein localises to the nucleus. Antagonistic role in the Wnt signaling pathway that operates in embryogenesis. When located at the cortex it has been shown to inhibit Wnt signaling during asymmetric cell division but when relocated to the nucleus it shows positive regulation. Has a role in blastomere signaling during endoderm specification. Component of the beta-catenin-lit-1 complex which promotes phosphorylation, down-regulation and subcellular relocation of pop-1. Within the complex, activates lit-1-dependent kinase activity. Can substitute for bar-1 indicating functional redundancy. Appears to have a role in centrosome positioning. Involved in the development of distal tip cells (DTC) by regulating the asymmetric distribution of cye-1 and cki-1 between the daughters of Z1.a and Z4.p cells. The sequence is that of Armadillo repeat-containing protein wrm-1 from Caenorhabditis briggsae.